The chain runs to 345 residues: Phenylalanine--tRNA ligase alpha subunit (345 aa).

Position 262 (glutamate 262) interacts with Mg(2+).

Belongs to the class-II aminoacyl-tRNA synthetase family. Phe-tRNA synthetase alpha subunit type 1 subfamily. In terms of assembly, tetramer of two alpha and two beta subunits. Mg(2+) is required as a cofactor.

The protein resides in the cytoplasm. The catalysed reaction is tRNA(Phe) + L-phenylalanine + ATP = L-phenylalanyl-tRNA(Phe) + AMP + diphosphate + H(+). This chain is Phenylalanine--tRNA ligase alpha subunit, found in Ehrlichia canis (strain Jake).